We begin with the raw amino-acid sequence, 463 residues long: Digalactosyldiacylglycerol synthase 2, chloroplastic (463 aa).

The first 22 residues, 1 to 22 (MGKKQHIAIFTTASLPWLTGTA), serve as a signal peptide directing secretion.

It belongs to the glycosyltransferase group 1 family. Glycosyltransferase 4 subfamily. In terms of tissue distribution, high expression in nodules infected cells, and low in nodule and root vascular tissue.

It is found in the plastid. Its subcellular location is the chloroplast outer membrane. The protein localises to the plastid outer membrane. The enzyme catalyses a 1,2-diacyl-3-O-(beta-D-galactosyl)-sn-glycerol + UDP-alpha-D-galactose = a 1,2-diacyl-3-O-[alpha-D-galactosyl-(1-&gt;6)-beta-D-galactosyl]-sn-glycerol + UDP + H(+). In terms of biological role, involved in the synthesis of diacylglycerol galactolipids that are specifically found in thylakoid and in nodule peribacteroid membranes. Specific for alpha-glycosidic linkages. The chain is Digalactosyldiacylglycerol synthase 2, chloroplastic from Lotus japonicus (Lotus corniculatus var. japonicus).